Reading from the N-terminus, the 615-residue chain is Dolichyl-diphosphooligosaccharide--protein glycosyltransferase subunit 1A (615 aa).

Positions 1–28 are cleaved as a signal peptide; it reads MATPPPLRRVAALLLLLVAAASTPTARA. The Lumenal segment spans residues 29 to 437; it reads DLVVTRADRK…RFNNISLLRE (409 aa). At lysine 187 the chain carries N6-acetyllysine. Residues asparagine 300, asparagine 353, and asparagine 431 are each glycosylated (N-linked (GlcNAc...) asparagine). A helical membrane pass occupies residues 438–455; the sequence is PMMLITGFFLLFMACIVY. Residues 456–615 lie on the Cytoplasmic side of the membrane; it reads MRTDMSISKN…ESLLEYISEI (160 aa).

The protein belongs to the OST1 family. In terms of assembly, component of the oligosaccharyltransferase (OST) complex.

The protein localises to the endoplasmic reticulum membrane. The protein operates within protein modification; protein glycosylation. Functionally, subunit of the oligosaccharyl transferase (OST) complex that catalyzes the initial transfer of a defined glycan (Glc(3)Man(9)GlcNAc(2) in eukaryotes) from the lipid carrier dolichol-pyrophosphate to an asparagine residue within an Asn-X-Ser/Thr consensus motif in nascent polypeptide chains, the first step in protein N-glycosylation. N-glycosylation occurs cotranslationally and the complex associates with the Sec61 complex at the channel-forming translocon complex that mediates protein translocation across the endoplasmic reticulum (ER). All subunits are required for a maximal enzyme activity. This chain is Dolichyl-diphosphooligosaccharide--protein glycosyltransferase subunit 1A (OST1A), found in Oryza sativa subsp. japonica (Rice).